The sequence spans 227 residues: Esterase Rv3036c (227 aa).

The helical transmembrane segment at 3-23 threads the bilayer; that stretch reads YLIATAVLVAVVLVGWPAAGA.

The protein belongs to the RsiV family.

Its subcellular location is the cell membrane. It localises to the secreted. The protein localises to the cell wall. The enzyme catalyses a fatty acid ester + H2O = an aliphatic alcohol + a fatty acid + H(+). It carries out the reaction an acetyl ester + H2O = an aliphatic alcohol + acetate + H(+). It catalyses the reaction a butanoate ester + H2O = an aliphatic alcohol + butanoate + H(+). The catalysed reaction is a hexanoate ester + H2O = an aliphatic alcohol + hexanoate + H(+). The enzyme catalyses a dodecanoate ester + H2O = an aliphatic alcohol + dodecanoate + H(+). It carries out the reaction a tetradecanoate ester + H2O = an aliphatic alcohol + tetradecanoate + H(+). It catalyses the reaction an octanoate ester + H2O = an aliphatic alcohol + octanoate + H(+). Its function is as follows. Hydrolyzes ester substrates carbon chain lengths ranging from C2 to C14. In vitro, acetate (C2), butyrate (C4) and caprylate (C6) are hydrolyzed with high efficiency. Has lower activity against laurate (C12), myristate (C14) and caproate (C8), and weak activity against palmitate (C16). In Mycobacterium tuberculosis (strain ATCC 25618 / H37Rv), this protein is Esterase Rv3036c.